We begin with the raw amino-acid sequence, 239 residues long: Small ribosomal subunit protein eS6B (239 aa).

3 positions are modified to phosphoserine: Ser148, Ser235, and Ser236.

It belongs to the eukaryotic ribosomal protein eS6 family. In terms of assembly, component of the small ribosomal subunit (SSU). Mature yeast ribosomes consist of a small (40S) and a large (60S) subunit. The 40S small subunit contains 1 molecule of ribosomal RNA (18S rRNA) and at least 33 different proteins. The large 60S subunit contains 3 rRNA molecules (25S, 5.8S and 5S rRNA) and at least 46 different proteins. Interacts with snoRNA U3. uS11 interacts with MPP10. Component of the ribosomal small subunit (SSU) processome composed of at least 40 protein subunits and snoRNA U3.

The protein localises to the cytoplasm. Its function is as follows. Component of the ribosome, a large ribonucleoprotein complex responsible for the synthesis of proteins in the cell. The small ribosomal subunit (SSU) binds messenger RNAs (mRNAs) and translates the encoded message by selecting cognate aminoacyl-transfer RNA (tRNA) molecules. The large subunit (LSU) contains the ribosomal catalytic site termed the peptidyl transferase center (PTC), which catalyzes the formation of peptide bonds, thereby polymerizing the amino acids delivered by tRNAs into a polypeptide chain. The nascent polypeptides leave the ribosome through a tunnel in the LSU and interact with protein factors that function in enzymatic processing, targeting, and the membrane insertion of nascent chains at the exit of the ribosomal tunnel. eS6 is involved in nucleolar processing of pre-18S ribosomal RNA and ribosome assembly. The sequence is that of Small ribosomal subunit protein eS6B (rps602) from Schizosaccharomyces pombe (strain 972 / ATCC 24843) (Fission yeast).